The chain runs to 226 residues: SURF1-like protein (226 aa).

2 helical membrane passes run 3–23 and 199–219; these read TNLV…WQLS and LEYA…YVIY.

It belongs to the SURF1 family.

It localises to the cell membrane. The chain is SURF1-like protein from Rickettsia felis (strain ATCC VR-1525 / URRWXCal2) (Rickettsia azadi).